Here is a 99-residue protein sequence, read N- to C-terminus: MVDSVFPAPSLVDETFLAPSSSETNDTAMAADGTLAKMNMFQFNSMLKEYSPPRFEDLFQDLDASKAGWEHYRPRLVSEVDLIDAEHYSLFSANTVSPL.

It functions in the pathway secondary metabolite biosynthesis. Part of the gene cluster that mediates the biosynthesis of imizoquins A to D, tripeptide-derived alkaloids that serve a protective role against oxidative stress that are essential for normal germination. ImqB is a canonical three-module NRPS that assembles the tripeptide backbone of the imizoquins via condensation of Trp, Tyr, and Leu-derived precursors. N-methylation by imqF and phenol oxidation by imqC, followed by cyclization via the FAD-dependent oxidase imqH carry out the three-step transformation of L-tyrosine into tetrahydroisoquinoline. Importantly, this sequence requires the presence of a free amine in the tyrosine moiety, indicating that isoquinoline formation occurs prior to peptide bond formation. The imidazolidin-4-one ring of imizoquins could form following additional oxidation of the methyl-derived bridgehead carbon by imqH. Lastly, O-methylation by imqG and leucine hydroxylation by imqE complete biosynthesis of the imizoquins. This is Imizoquin biosynthesis cluster protein A from Aspergillus flavus (strain ATCC 200026 / FGSC A1120 / IAM 13836 / NRRL 3357 / JCM 12722 / SRRC 167).